Here is a 715-residue protein sequence, read N- to C-terminus: MPAESGKRFKPSKYVPVSAAAIFLVGATTLFFAFTCPGLSLYVSPAVPIYNAIMFLFVLANFSMATFMDPGIFPRAEEDEDKEDDFRAPLYKTVEIKGIQVRMKWCATCRFYRPPRCSHCSVCDNCVEEFDHHCPWVNNCIGRRNYRYFFLFLLSLTAHIMGVFGFGLLYVLYHIEELSGVRTAVTMAVMCVAGLFFIPVAGLTGFHVVLVARGRTTNEQVTGKFRGGVNPFTNGCCNNVSRVLCSSPAPRYLGRPKKEKTIVIRPPFLRPEVSDGQITVKIMDNGIQGELRRTKSKGSLEITESQSADAEPPPPPKPDLSRYTGLRTHLGLATNEDSSLLAKDSPPTPTMYKYRPGYSSSSTSAAMPHSSSAKLSRGDSLKEPTSIAESSRHPSYRSEPSLEPESFRSPTFGKSFHFDPLSSGSRSSSLKSAQGTGFELGQLQSIRSEGTTSTSYKSLANQTRNGSLSYDSLLTPSDSPDFESVQAGPEPDPPLGYTSPFLSARLAQQREAERHPRLVPTGPTHREPSPVRYDNLSRHIVASLQEREKLLRQSPPLPVREEEPGLGDSGIQSTPGSGHAPRTSSSSDDSKRSPLGKTPLGRPAVPRFGKPDGLRGRGVGSPEPGPTAPYLGRSMSYSSQKAQPGVSETEEVALQPLLTPKDEVQLKTTYSKSNGQPKSLGSASPGPGQPPLSSPTRGGVKKVSGVGGTTYEISV.

Over 1 to 13 (MPAESGKRFKPSK) the chain is Cytoplasmic. A helical membrane pass occupies residues 14–34 (YVPVSAAAIFLVGATTLFFAF). Over 35–38 (TCPG) the chain is Extracellular. A helical membrane pass occupies residues 39–59 (LSLYVSPAVPIYNAIMFLFVL). Topologically, residues 60 to 148 (ANFSMATFMD…NCIGRRNYRY (89 aa)) are cytoplasmic. Position 91 is a phosphotyrosine (tyrosine 91). The region spanning 104–154 (KWCATCRFYRPPRCSHCSVCDNCVEEFDHHCPWVNNCIGRRNYRYFFLFLL) is the DHHC domain. Catalysis depends on cysteine 134, which acts as the S-palmitoyl cysteine intermediate. Residues 149 to 169 (FFLFLLSLTAHIMGVFGFGLL) traverse the membrane as a helical segment. The Extracellular portion of the chain corresponds to 170–191 (YVLYHIEELSGVRTAVTMAVMC). The helical transmembrane segment at 192–212 (VAGLFFIPVAGLTGFHVVLVA) threads the bilayer. At 213 to 715 (RGRTTNEQVT…VGGTTYEISV (503 aa)) the chain is on the cytoplasmic side. Residue serine 247 is modified to Phosphoserine. The interval 289–715 (GELRRTKSKG…VGGTTYEISV (427 aa)) is disordered. Residue threonine 294 is modified to Phosphothreonine. Phosphoserine occurs at positions 296 and 299. Residue threonine 303 is modified to Phosphothreonine. Serine 345 carries the phosphoserine modification. Phosphothreonine occurs at positions 348 and 350. The span at 359 to 373 (SSSSTSAAMPHSSSA) shows a compositional bias: low complexity. Phosphoserine is present on residues serine 380, serine 398, serine 406, and serine 409. At threonine 411 the chain carries Phosphothreonine. Phosphoserine occurs at positions 415, 425, 429, and 432. Residues 422-432 (SSGSRSSSLKS) are compositionally biased toward low complexity. Residue threonine 436 is modified to Phosphothreonine. A compositionally biased stretch (polar residues) spans 442–478 (QLQSIRSEGTTSTSYKSLANQTRNGSLSYDSLLTPSD). Phosphoserine occurs at positions 529 and 554. An Omega-N-methylarginine modification is found at arginine 617. Position 621 is a phosphoserine (serine 621). Threonine 659 is subject to Phosphothreonine. Over residues 666–677 (LKTTYSKSNGQP) the composition is skewed to polar residues. Phosphoserine is present on residues serine 684 and serine 694. At arginine 697 the chain carries Omega-N-methylarginine.

The protein belongs to the DHHC palmitoyltransferase family. ERF2/ZDHHC9 subfamily.

It localises to the cell membrane. The enzyme catalyses L-cysteinyl-[protein] + hexadecanoyl-CoA = S-hexadecanoyl-L-cysteinyl-[protein] + CoA. Functionally, palmitoyltransferase that catalyzes the addition of palmitate onto various protein substrates such as CTNND2, CD36, GSDMD, NLRP3, NOD1, NOD2, STAT3 and S1PR1 thus plays a role in various biological processes including cell adhesion, inflammation, fatty acid uptake, bacterial sensing or cardiac functions. Plays an important role in the regulation of synapse efficacy by mediating palmitoylation of delta-catenin/CTNND2, thereby increasing synaptic delivery and surface stabilization of alpha-amino-3-hydroxy-5-methyl-4-isoxazole propionic acid receptors (AMPARs). Under basal conditions, remains at the synaptic membrane through FYN-mediated phosphorylation that prevents association with endocytic proteins. Neuronal activity enhances the internalization and trafficking of DHHC5 from spines to dendritic shafts where it palmitoylates delta-catenin/CTNND2. Regulates cell adhesion at the plasma membrane by palmitoylating GOLGA7B and DSG2. Plays a role in innate immune response by mediating the palmitoylation of NOD1 and NOD2 and their proper recruitment to the bacterial entry site and phagosomes. Also participates in fatty acid uptake by palmitoylating CD36 and thereby targeting it to the plasma membrane. Upon binding of fatty acids to CD36, gets phosphorylated by LYN leading to inactivation and subsequent CD36 caveolar endocytosis. Controls oligodendrocyte development by catalyzing STAT3 palmitoylation. Acts as a regulator of inflammatory response by mediating palmitoylation of NLRP3 and GSDMD. Palmitoylates NLRP3 to promote inflammasome assembly and activation. Activates pyroptosis by catalyzing palmitoylation of gasdermin-D (GSDMD), thereby promoting membrane translocation and pore formation of GSDMD. In Pan troglodytes (Chimpanzee), this protein is Palmitoyltransferase ZDHHC5 (ZDHHC5).